Reading from the N-terminus, the 238-residue chain is NADH-quinone oxidoreductase subunit C (238 aa).

The span at 1 to 11 shows a compositional bias: polar residues; that stretch reads MSTSNGSANGT. The disordered stretch occupies residues 1–20; the sequence is MSTSNGSANGTNGVGLPRGD.

This sequence belongs to the complex I 30 kDa subunit family. As to quaternary structure, NDH-1 is composed of 14 different subunits. Subunits NuoB, C, D, E, F, and G constitute the peripheral sector of the complex.

The protein localises to the cell membrane. The catalysed reaction is a quinone + NADH + 5 H(+)(in) = a quinol + NAD(+) + 4 H(+)(out). Its function is as follows. NDH-1 shuttles electrons from NADH, via FMN and iron-sulfur (Fe-S) centers, to quinones in the respiratory chain. The immediate electron acceptor for the enzyme in this species is believed to be a menaquinone. Couples the redox reaction to proton translocation (for every two electrons transferred, four hydrogen ions are translocated across the cytoplasmic membrane), and thus conserves the redox energy in a proton gradient. This Mycolicibacterium smegmatis (strain ATCC 700084 / mc(2)155) (Mycobacterium smegmatis) protein is NADH-quinone oxidoreductase subunit C.